Here is a 336-residue protein sequence, read N- to C-terminus: Ferrochelatase (336 aa).

Fe cation-binding residues include histidine 206 and glutamate 287.

This sequence belongs to the ferrochelatase family.

It localises to the cytoplasm. The catalysed reaction is heme b + 2 H(+) = protoporphyrin IX + Fe(2+). The protein operates within porphyrin-containing compound metabolism; protoheme biosynthesis; protoheme from protoporphyrin-IX: step 1/1. In terms of biological role, catalyzes the ferrous insertion into protoporphyrin IX. The sequence is that of Ferrochelatase from Neisseria meningitidis serogroup C / serotype 2a (strain ATCC 700532 / DSM 15464 / FAM18).